A 375-amino-acid chain; its full sequence is Patatin-1-Kuras 2 (375 aa).

The signal sequence occupies residues 1 to 11 (MILATTSSTFA). The 199-residue stretch at 20 to 218 (LSIDGGGIKG…TVADPALLSV (199 aa)) folds into the PNPLA domain. A GXGXXG motif is present at residues 24-29 (GGGIKG). A GXSXG motif is present at residues 63 to 67 (GTSTG). Serine 65 functions as the Nucleophile in the catalytic mechanism. Asparagine 103 carries an N-linked (GlcNAc...) asparagine glycan. Aspartate 204 serves as the catalytic Proton acceptor. The DGA/G motif lies at 204-206 (DGA). Positions 349 to 373 (ETYEEALKRFAKLLSDRKKLRANKA) form a coiled coil.

Belongs to the patatin family. Tuber.

The protein resides in the vacuole. Functionally, probable lipolytic acyl hydrolase (LAH), an activity which is thought to be involved in the response of tubers to pathogens. This chain is Patatin-1-Kuras 2 (pat1-k2), found in Solanum tuberosum (Potato).